The following is a 1293-amino-acid chain: DNA-directed RNA polymerase subunit beta' (1293 aa).

Residues C60, C62, C75, and C78 each coordinate Zn(2+). Mg(2+)-binding residues include D535, D537, and D539. Zn(2+) is bound by residues C873, C950, C957, and C960.

Belongs to the RNA polymerase beta' chain family. As to quaternary structure, the RNAP catalytic core consists of 2 alpha, 1 beta, 1 beta' and 1 omega subunit. When a sigma factor is associated with the core the holoenzyme is formed, which can initiate transcription. Mg(2+) serves as cofactor. It depends on Zn(2+) as a cofactor.

It carries out the reaction RNA(n) + a ribonucleoside 5'-triphosphate = RNA(n+1) + diphosphate. Its function is as follows. DNA-dependent RNA polymerase catalyzes the transcription of DNA into RNA using the four ribonucleoside triphosphates as substrates. The chain is DNA-directed RNA polymerase subunit beta' from Cutibacterium acnes (strain DSM 16379 / KPA171202) (Propionibacterium acnes).